The primary structure comprises 310 residues: Olfactory receptor 9Q1 (310 aa).

At 1-25 (MAEMNLTLVTEFLLIAFTEYPEWAL) the chain is on the extracellular side. N5 is a glycosylation site (N-linked (GlcNAc...) asparagine). Residues 26–46 (PLFLLFLFMYLITVLGNLEMI) form a helical membrane-spanning segment. Topologically, residues 47 to 54 (ILILMDHQ) are cytoplasmic. The helical transmembrane segment at 55–75 (LHAPMYFLLSHLAFMDVCYSS) threads the bilayer. Over 76–99 (ITVPQMLAVLLEHGAALSYTRCAA) the chain is Extracellular. C97 and C189 are oxidised to a cystine. A helical membrane pass occupies residues 100 to 120 (QFFLFTFFGSIDCYLLALMAY). Topologically, residues 121–139 (DRYLAVCQPLLYVTILTQQ) are cytoplasmic. Residues 140–160 (ARLSLVAGAYVAGLISALVRT) form a helical membrane-spanning segment. Topologically, residues 161–197 (VSAFTLSFCGTSEIDFIFCDLPPLLKLTCGESYTQEV) are extracellular. A helical transmembrane segment spans residues 198–217 (LIIMFAIFVIPASMVVILVS). Over 218-236 (YLFIIVAIMGIPAGSQAKT) the chain is Cytoplasmic. The helical transmembrane segment at 237 to 257 (FSTCTSHLTAVSLFFGTLIFM) threads the bilayer. The Extracellular segment spans residues 258–270 (YLRGNSDQSSEKN). Residues 271-291 (RVVSVLYTEVIPMLNPLIYSL) form a helical membrane-spanning segment. Residues 292-310 (RNKEVKEALRKILNRAKLS) lie on the Cytoplasmic side of the membrane.

Belongs to the G-protein coupled receptor 1 family.

The protein localises to the cell membrane. In terms of biological role, odorant receptor. This Homo sapiens (Human) protein is Olfactory receptor 9Q1 (OR9Q1).